The chain runs to 23 residues: Aurein-4.1 (23 aa).

It belongs to the frog skin active peptide (FSAP) family. Aurein subfamily. In terms of tissue distribution, expressed by the skin dorsal glands.

It is found in the secreted. Has no antimicrobial or anticancer activity. This is Aurein-4.1 from Ranoidea aurea (Green and golden bell frog).